We begin with the raw amino-acid sequence, 806 residues long: WEB family protein At3g02930, chloroplastic (806 aa).

The N-terminal 78 residues, 1 to 78 (MASKIKNGLS…PTPPEKTQIR (78 aa)), are a transit peptide targeting the chloroplast. Disordered stretches follow at residues 1–94 (MASK…QIKE) and 380–403 (KSEQ…EKLK). Low complexity predominate over residues 9 to 22 (LSDTTLRKSSSTSL). Over residues 34-59 (PDSNSPSPTQQQSRLSFERPSSNSKP) the composition is skewed to polar residues. 3 coiled-coil regions span residues 88-530 (QSVQ…FESA), 585-662 (DCLK…IEEN), and 698-757 (ETLD…EDLN). The span at 391–403 (ESSKSEKEAEKLK) shows a compositional bias: basic and acidic residues. Disordered regions lie at residues 684–725 (ENGY…EDET) and 746–777 (KESA…EDEL). Composition is skewed to basic and acidic residues over residues 685 to 699 (NGYR…KVET) and 706 to 725 (KLEE…EDET). Positions 759–769 (VDQSQKTSPVN) are enriched in polar residues.

The protein belongs to the WEB family.

It is found in the plastid. It localises to the chloroplast. The chain is WEB family protein At3g02930, chloroplastic from Arabidopsis thaliana (Mouse-ear cress).